Consider the following 97-residue polypeptide: SAGA-associated factor 11 (97 aa).

The SGF11-type zinc-finger motif lies at 70 to 91 (IECNVCGREVSGNRFAAHLVRC).

It belongs to the SGF11 family. As to quaternary structure, component of the 1.8 MDa SAGA transcription coactivator-HAT complex. SAGA is built of 5 distinct domains with specialized functions. Within the SAGA complex, SUS1, SGF11, SGF73 and UBP8 form an additional subcomplex of SAGA called the DUB module (deubiquitination module). Interacts directly with SGF73, SUS1 and UBP8.

The protein localises to the nucleus. In terms of biological role, functions as a component of the transcription regulatory histone acetylation (HAT) complex SAGA. At the promoters, SAGA is required for recruitment of the basal transcription machinery. It influences RNA polymerase II transcriptional activity through different activities such as TBP interaction and promoter selectivity, interaction with transcription activators, and chromatin modification through histone acetylation and deubiquitination. SAGA acetylates nucleosomal histone H3 to some extent (to form H3K9ac, H3K14ac, H3K18ac and H3K23ac). SAGA interacts with DNA via upstream activating sequences (UASs). Involved in transcriptional regulation of a subset of SAGA-regulated genes. Within the SAGA complex, participates in a subcomplex, that specifically deubiquitinates histones H2B. This is SAGA-associated factor 11 from Kluyveromyces lactis (strain ATCC 8585 / CBS 2359 / DSM 70799 / NBRC 1267 / NRRL Y-1140 / WM37) (Yeast).